We begin with the raw amino-acid sequence, 367 residues long: Quinolinate synthase (367 aa).

Iminosuccinate is bound by residues His-64 and Ser-82. Cys-127 contacts [4Fe-4S] cluster. Residues Tyr-153–Asn-155 and Ser-170 contribute to the iminosuccinate site. Position 216 (Cys-216) interacts with [4Fe-4S] cluster. Iminosuccinate-binding positions include His-242–Glu-244 and Thr-259. Residue Cys-302 participates in [4Fe-4S] cluster binding.

This sequence belongs to the quinolinate synthase family. Type 2 subfamily. The cofactor is [4Fe-4S] cluster.

It localises to the cytoplasm. The enzyme catalyses iminosuccinate + dihydroxyacetone phosphate = quinolinate + phosphate + 2 H2O + H(+). Its pathway is cofactor biosynthesis; NAD(+) biosynthesis; quinolinate from iminoaspartate: step 1/1. Catalyzes the condensation of iminoaspartate with dihydroxyacetone phosphate to form quinolinate. This chain is Quinolinate synthase, found in Caulobacter vibrioides (strain ATCC 19089 / CIP 103742 / CB 15) (Caulobacter crescentus).